We begin with the raw amino-acid sequence, 251 residues long: MERGTASGGASLLKEFHPVQTLQQVENYTALSERASEYLLAVIRSKPNAVICLATGATPLLTYHYLVEKIHQQQVDVSQLTFVKLDEWVDLPLTMPGTCETFLQQHIVQPLGLREDQLISFRSEEINETECERVTNLIARKGGLDLCVLGLGKNGHLGLNEPGESLQPACHISQLDARTQQHEMLKTAGRPVTRGITLGLKDILNAREVLLLVTGEGKQDATDRFLTAKVSTAIPASFLWLHSNFICLINT.

Catalysis depends on aspartate 86, which acts as the Proton acceptor; for enolization step. Asparagine 154 functions as the For ring-opening step in the catalytic mechanism. The active-site Proton acceptor; for ring-opening step is the histidine 156. The active-site For ring-opening step is glutamate 161.

The protein belongs to the glucosamine/galactosamine-6-phosphate isomerase family.

The polypeptide is Putative deaminase AgaI (agaI) (Escherichia coli (strain K12)).